Here is a 261-residue protein sequence, read N- to C-terminus: [LysW]-aminoadipate/[LysW]-glutamate kinase (261 aa).

Substrate is bound by residues 35–36 (GG), arginine 62, and asparagine 166.

It belongs to the acetylglutamate kinase family. LysZ subfamily.

The protein localises to the cytoplasm. It catalyses the reaction [amino-group carrier protein]-C-terminal-N-(1,4-dicarboxybutan-1-yl)-L-glutamine + ATP = [amino-group carrier protein]-C-terminal-N-(1-carboxy-5-phosphooxy-5-oxopentan-1-yl)-L-glutamine + ADP. The catalysed reaction is [amino-group carrier protein]-C-terminal-gamma-(L-glutamyl)-L-glutamate + ATP = [amino-group carrier protein]-C-terminal-gamma-(5-phospho-L-glutamyl)-L-glutamate + ADP. It functions in the pathway amino-acid biosynthesis; L-lysine biosynthesis via AAA pathway; L-lysine from L-alpha-aminoadipate (Thermus route): step 2/5. Its pathway is amino-acid biosynthesis; L-arginine biosynthesis. In terms of biological role, involved in both the arginine and lysine biosynthetic pathways. Phosphorylates the LysW-bound precursors glutamate (for arginine biosynthesis), respectively alpha-aminoadipate (for lysine biosynthesis). In Sulfolobus acidocaldarius (strain ATCC 33909 / DSM 639 / JCM 8929 / NBRC 15157 / NCIMB 11770), this protein is [LysW]-aminoadipate/[LysW]-glutamate kinase.